A 1342-amino-acid polypeptide reads, in one-letter code: DNA-directed RNA polymerase subunit beta (1342 aa).

This sequence belongs to the RNA polymerase beta chain family. The RNAP catalytic core consists of 2 alpha, 1 beta, 1 beta' and 1 omega subunit. When a sigma factor is associated with the core the holoenzyme is formed, which can initiate transcription.

The enzyme catalyses RNA(n) + a ribonucleoside 5'-triphosphate = RNA(n+1) + diphosphate. Its function is as follows. DNA-dependent RNA polymerase catalyzes the transcription of DNA into RNA using the four ribonucleoside triphosphates as substrates. The chain is DNA-directed RNA polymerase subunit beta from Actinobacillus pleuropneumoniae serotype 3 (strain JL03).